Consider the following 370-residue polypeptide: Alpha-ketoglutarate-dependent dioxygenase cnsP (370 aa).

The span at 1–12 (MSTTTVITPGTI) shows a compositional bias: low complexity. Residues 1–20 (MSTTTVITPGTITREKNENG) form a disordered region. Substrate is bound at residue His131. Positions 169 and 171 each coordinate Fe cation. A 2-oxoglutarate-binding site is contributed by Thr197. A Fe cation-binding site is contributed by His321. Residues Arg333 and Arg337 each contribute to the 2-oxoglutarate site. Arg337 is a binding site for substrate.

Belongs to the TfdA dioxygenase family. Fe(2+) serves as cofactor.

It participates in alkaloid biosynthesis. Alpha-ketoglutarate-dependent dioxygenase; part of the gene cluster that mediates the biosynthesis of communesins, a prominent class of indole alkaloids with great potential as pharmaceuticals. Communesins are biosynthesized by the coupling of tryptamine and aurantioclavine, two building blocks derived from L-tryptophan. The L-tryptophan decarboxylase cnsB converts L-tryptophan to tryptamine, whereas the tryptophan dimethylallyltransferase cnsF converts L-tryptophan to 4-dimethylallyl tryptophan which is further transformed to aurantioclavine by the aurantioclavine synthase cnsA, probably aided by the catalase cnsD. The cytochrome P450 monooxygenase cnsC catalyzes the heterodimeric coupling between the two different indole moieties, tryptamine and aurantioclavine, to construct vicinal quaternary stereocenters and yield the heptacyclic communesin scaffold. The O-methyltransferase cnsE then methylates the communesin scaffold to produce communesin K, the simplest characterized communesin that contains the heptacyclic core. The dioxygenase cnsJ converts communesin K into communesin I. Acylation to introduce the hexadienyl group at position N16 of communesin I by the acyltransferase cnsK leads to the production of communesin B. The hexadienyl group is produced by the highly reducing polyketide synthase cnsI, before being hydrolytically removed from cnsI by the serine hydrolase cnsH, converted into hexadienyl-CoA by the CoA ligase cnsG, and then transferred to communesin I by cnsK. Surprisingly, cnsK may also be a promiscuous acyltransferase that can tolerate a range of acyl groups, including acetyl-, propionyl-, and butyryl-CoA, which lead to communesins A, G and H respectively. The roles of the alpha-ketoglutarate-dependent dioxygenases cnsM and cnsP have still to be determined. The chain is Alpha-ketoglutarate-dependent dioxygenase cnsP from Penicillium expansum (Blue mold rot fungus).